The chain runs to 72 residues: Translation initiation factor IF-1 (72 aa).

Residues 1–72 (MSKEDAIEVM…TRGRIVYRYK (72 aa)) enclose the S1-like domain.

It belongs to the IF-1 family. In terms of assembly, component of the 30S ribosomal translation pre-initiation complex which assembles on the 30S ribosome in the order IF-2 and IF-3, IF-1 and N-formylmethionyl-tRNA(fMet); mRNA recruitment can occur at any time during PIC assembly.

It localises to the cytoplasm. In terms of biological role, one of the essential components for the initiation of protein synthesis. Stabilizes the binding of IF-2 and IF-3 on the 30S subunit to which N-formylmethionyl-tRNA(fMet) subsequently binds. Helps modulate mRNA selection, yielding the 30S pre-initiation complex (PIC). Upon addition of the 50S ribosomal subunit IF-1, IF-2 and IF-3 are released leaving the mature 70S translation initiation complex. The polypeptide is Translation initiation factor IF-1 (Koribacter versatilis (strain Ellin345)).